Here is a 508-residue protein sequence, read N- to C-terminus: MRSIRLFHTSSTWLSKFKLDPNYKFKCGIEIHTQLKTKYKLFSLSPTSFYSTPNSKVSYFDCGLPGTQPKLNPEALYLALKLAVALDCEIQQNSSFDRKHYFYPDQPLGYQITQHYHPIAKNGFLELNSKFDEIKNSSKKINIEQIQIEQDTGKTTYDKFDKSVKVDYNRSNMPLIELVTKPDFEDLQQVRAFVKKYQTMVRHLDICTGDLETGAIRIDVNVSVNGNPRVEIKNLGSNSDIQDALKYEYTRQVDSIKNNEKIIQETRGWTGTKTVSLRLKEDAVDYRYVPDSELPFINLSPTIASDIKESLPELPEQILQKLTSKPYDLELKYARFLTENRDTLNYYFQLFKSVADRHHSGKLANNWFIHEFLGAFTKINVKVDLDILPANFLADLVLQVAEKNISTTSARLLLLQIIQTPEDKGKPIQDLIVQYDLGSPVDMSTEDLNDAVSDICSEIISNNADVVERIKKGQKNSIKFLIGLAMKETQGKVNAKTFSEKFNELLDL.

Belongs to the GatB/GatE family. GatB subfamily. Subunit of the heterotrimeric GatFAB amidotransferase (AdT) complex, composed of A, B and F subunits.

It is found in the mitochondrion. It carries out the reaction L-glutamyl-tRNA(Gln) + L-glutamine + ATP + H2O = L-glutaminyl-tRNA(Gln) + L-glutamate + ADP + phosphate + H(+). Functionally, allows the formation of correctly charged Gln-tRNA(Gln) through the transamidation of misacylated Glu-tRNA(Gln) in the mitochondria. The reaction takes place in the presence of glutamine and ATP through an activated gamma-phospho-Glu-tRNA(Gln). This chain is Glutamyl-tRNA(Gln) amidotransferase subunit B, mitochondrial, found in Scheffersomyces stipitis (strain ATCC 58785 / CBS 6054 / NBRC 10063 / NRRL Y-11545) (Yeast).